Consider the following 209-residue polypeptide: Small ribosomal subunit protein uS4 (209 aa).

The S4 RNA-binding domain maps to 99 to 160 (RRLDNVVYRL…GSKEMTLLGQ (62 aa)).

It belongs to the universal ribosomal protein uS4 family. As to quaternary structure, part of the 30S ribosomal subunit. Contacts protein S5. The interaction surface between S4 and S5 is involved in control of translational fidelity.

Its function is as follows. One of the primary rRNA binding proteins, it binds directly to 16S rRNA where it nucleates assembly of the body of the 30S subunit. With S5 and S12 plays an important role in translational accuracy. The polypeptide is Small ribosomal subunit protein uS4 (Koribacter versatilis (strain Ellin345)).